The chain runs to 407 residues: Snake venom metalloproteinase ACLH (407 aa).

A signal peptide spans 1-20 (MIQVLLVTLCLAAFPYQGSS). The propeptide occupies 21–187 (IILESGNVND…PIKKASQLNL (167 aa)). The Peptidase M12B domain occupies 193–389 (RYVELVTVVD…ENPQCILNKP (197 aa)). Glutamate 196 and aspartate 280 together coordinate Ca(2+). 3 cysteine pairs are disulfide-bonded: cysteine 304–cysteine 384, cysteine 344–cysteine 368, and cysteine 346–cysteine 351. Position 329 (histidine 329) interacts with Zn(2+). Glutamate 330 is an active-site residue. Residues histidine 333 and histidine 339 each coordinate Zn(2+). N-linked (GlcNAc...) asparagine glycosylation occurs at asparagine 367. The Ca(2+) site is built by cysteine 384 and asparagine 387.

The protein belongs to the venom metalloproteinase (M12B) family. P-I subfamily. Monomer. Requires Zn(2+) as cofactor. Post-translationally, contains sialic acid terminally alpha(2-6)-linked to galactose in a complex N-glycan chain. Expressed by the venom gland.

It localises to the secreted. This zinc hemorrhagic metalloproteinase has fibrino(geno)lytic activities. It causes hemorrhage and has myonecrotic activity on both fiber types I and II. The recombinant enzyme, without post-translational modifications, also has proteolytic activity, but does not show any hemorrhagic activity. The polypeptide is Snake venom metalloproteinase ACLH (Agkistrodon contortrix laticinctus (Broad-banded copperhead)).